A 208-amino-acid polypeptide reads, in one-letter code: Guanylate kinase (208 aa).

Residues 4–185 (GNLYIISAPS…ALVDLEHILR (182 aa)) form the Guanylate kinase-like domain. Residue 11-18 (APSGAGKS) participates in ATP binding.

The protein belongs to the guanylate kinase family.

It is found in the cytoplasm. It carries out the reaction GMP + ATP = GDP + ADP. Functionally, essential for recycling GMP and indirectly, cGMP. In Histophilus somni (strain 129Pt) (Haemophilus somnus), this protein is Guanylate kinase.